A 1388-amino-acid chain; its full sequence is Rho-associated protein kinase 2 (1388 aa).

The segment at 1–24 (MSRPPPTGKMPGAPEAVSGDGAGA) is disordered. The region spanning 92–354 (YDVVKVIGRG…VEEIKQHPFF (263 aa)) is the Protein kinase domain. Residues 98–106 (IGRGAFGEV) and K121 each bind ATP. D214 serves as the catalytic Proton acceptor. The region spanning 357-425 (DQWNWDNIRE…YRENLLLSDS (69 aa)) is the AGC-kinase C-terminal domain. The tract at residues 363–784 (NIRETAAPVV…INELLKQKDV (422 aa)) is interaction with PPP1R12A. An interaction with NPM1 region spans residues 373-420 (PELSSDIDSSNFDDIEDDKGDVETFPIPKAFVGNQLPFIGFTYYRENL). T414 is modified (phosphothreonine; by ROCK2). Coiled coils occupy residues 439 to 1025 (NEES…KQLL) and 1053 to 1131 (DTDV…IGLD). The REM-1 domain maps to 497-573 (TLRQLEREKA…LDETNALLRT (77 aa)). Residues 512 to 530 (NAEYQRKADHEADKKRNLE) are compositionally biased toward basic and acidic residues. Positions 512–532 (NAEYQRKADHEADKKRNLEND) are disordered. Y722 bears the Phosphotyrosine; by SRC mark. Residues 979–1047 (TSDVANLANE…LAEIMNRKEP (69 aa)) enclose the RhoBD domain. Residues 979–1047 (TSDVANLANE…LAEIMNRKEP (69 aa)) are RHOA binding. A Phosphoserine modification is found at S1137. The PH domain occupies 1150–1349 (ESRLEGWLSL…WVSRLVKKIP (200 aa)). T1212 is subject to Phosphothreonine. The Phorbol-ester/DAG-type zinc finger occupies 1260–1315 (GHEFIPTLYHFPTNCEACMKPLWHMFKPPPALECRRCHIKCHKDHMDKKEEIIAPC). Residues 1345 to 1388 (VKKIPKKPPAPDPFARSSPRTSMKIQQNQSIRRPSRQLAPNKPS) form a disordered region. Phosphoserine is present on residues S1362 and S1374. Over residues 1362 to 1376 (SPRTSMKIQQNQSIR) the composition is skewed to polar residues.

Belongs to the protein kinase superfamily. AGC Ser/Thr protein kinase family. Homodimer. Interacts with IRS1. Interacts with RAF1. Interacts with RHOA (activated by GTP). Interacts with RHOB and RHOC. Interacts with PPP1R12A. Interacts with EP300. Interacts with CHORDC1. Interacts with BRCA2. Interacts with NPM1; this interaction enhances ROCK2 activity. Interacts with SORL1. Interacts with PJVK. Mg(2+) is required as a cofactor. Autophosphorylated. Phosphorylation at Tyr-722 reduces its binding to RHOA and is crucial for focal adhesion dynamics. Dephosphorylation by PTPN11 stimulates its RHOA binding activity. Post-translationally, cleaved by granzyme B during apoptosis. This leads to constitutive activation of the kinase and membrane blebbing. In terms of tissue distribution, highly expressed in whole brain and in cerebellum, and at lower levels in heart and lung. Detected at low levels in skeletal muscle, spleen, liver, kidney and pancreas.

Its subcellular location is the cytoplasm. It localises to the cell membrane. The protein localises to the nucleus. The protein resides in the cytoskeleton. It is found in the microtubule organizing center. Its subcellular location is the centrosome. It catalyses the reaction L-seryl-[protein] + ATP = O-phospho-L-seryl-[protein] + ADP + H(+). The enzyme catalyses L-threonyl-[protein] + ATP = O-phospho-L-threonyl-[protein] + ADP + H(+). Activated by RHOA binding. Inhibited by Y-27632. Functionally, protein kinase which is a key regulator of actin cytoskeleton and cell polarity. Involved in regulation of smooth muscle contraction, actin cytoskeleton organization, stress fiber and focal adhesion formation, neurite retraction, cell adhesion and motility via phosphorylation of ADD1, BRCA2, CNN1, EZR, DPYSL2, EP300, MSN, MYL9/MLC2, NPM1, RDX, PPP1R12A and VIM. Phosphorylates SORL1 and IRF4. Acts as a negative regulator of VEGF-induced angiogenic endothelial cell activation. Positively regulates the activation of p42/MAPK1-p44/MAPK3 and of p90RSK/RPS6KA1 during myogenic differentiation. Plays an important role in the timely initiation of centrosome duplication. Inhibits keratinocyte terminal differentiation. May regulate closure of the eyelids and ventral body wall through organization of actomyosin bundles. Plays a critical role in the regulation of spine and synaptic properties in the hippocampus. Plays an important role in generating the circadian rhythm of the aortic myofilament Ca(2+) sensitivity and vascular contractility by modulating the myosin light chain phosphorylation. The chain is Rho-associated protein kinase 2 (ROCK2) from Bos taurus (Bovine).